The following is a 992-amino-acid chain: Presequence protease, mitochondrial (992 aa).

Residues 1–30 (MNYAKLSIAFSKKTIKTHNCRLFQRWLHVG) constitute a mitochondrion transit peptide. His91 is a Zn(2+) binding site. Glu94 acts as the Proton acceptor in catalysis. Zn(2+) is bound at residue His95. Glu167 is an active-site residue. Glu192 contributes to the Zn(2+) binding site.

This sequence belongs to the peptidase M16 family. PreP subfamily. In terms of assembly, monomer and homodimer; homodimerization is induced by binding of the substrate. Zn(2+) is required as a cofactor.

It is found in the mitochondrion intermembrane space. It localises to the mitochondrion matrix. Its function is as follows. Degrades mitochondrial transit peptides after their cleavage in the intermembrane space or in the matrix, and presequence peptides; clearance of these peptides is required to keep the presequence processing machinery running. Preferentially cleaves the N-terminal side of paired basic amino acid residues. Also degrades other unstructured peptides. May function as an ATP-dependent peptidase as opposed to a metalloendopeptidase. This chain is Presequence protease, mitochondrial (cym1), found in Schizosaccharomyces pombe (strain 972 / ATCC 24843) (Fission yeast).